A 313-amino-acid polypeptide reads, in one-letter code: MSKVTVVGAGNVGATCANVLAFNEVADEVVMLDVKEGVSEGKAMDMMQTAQLLGFDTTIVGCTNDYAQTANSDVVVITSGIPRKPGMTREELIGVNAGIVKSVAENLLKYSPNAIIVVISNPMDTMTYLALKSLGLPKNRVIGMGGALDSSRFKYFLSQALGCNANEVEGMVIGGHGDTTMIPLARLATYKGQPVSTLLSEEKLNEVVASTMVGGATLTKLLGTSAWYAPGAAGAYVVESIIHNQKKMVPCSVMLEGEYGESDLCIGVPVILGKNGIEKIVELELNADEKAKFAASAAAVHKTNAALKEVGAL.

NAD(+)-binding positions include 8–13 (GAGNVG) and Asp33. 2 residues coordinate substrate: Arg83 and Arg89. Residues Asn96 and 119–121 (ISN) each bind NAD(+). Substrate contacts are provided by Asn121 and Arg152. His176 (proton acceptor) is an active-site residue.

It belongs to the LDH/MDH superfamily. MDH type 3 family.

The catalysed reaction is (S)-malate + NAD(+) = oxaloacetate + NADH + H(+). In terms of biological role, catalyzes the reversible oxidation of malate to oxaloacetate. The protein is Malate dehydrogenase of Bacteroides fragilis (strain ATCC 25285 / DSM 2151 / CCUG 4856 / JCM 11019 / LMG 10263 / NCTC 9343 / Onslow / VPI 2553 / EN-2).